The following is a 118-amino-acid chain: Large ribosomal subunit protein uL18 (118 aa).

It belongs to the universal ribosomal protein uL18 family. In terms of assembly, part of the 50S ribosomal subunit; part of the 5S rRNA/L5/L18/L25 subcomplex. Contacts the 5S and 23S rRNAs.

Functionally, this is one of the proteins that bind and probably mediate the attachment of the 5S RNA into the large ribosomal subunit, where it forms part of the central protuberance. In Brachyspira hyodysenteriae (strain ATCC 49526 / WA1), this protein is Large ribosomal subunit protein uL18.